A 194-amino-acid polypeptide reads, in one-letter code: Mitochondrial import inner membrane translocase subunit Tim22 (194 aa).

Cystine bridges form between C69-C141 and C160-C179. The next 3 membrane-spanning stretches (helical) occupy residues 74 to 94 (VLACVGGFVLGGAFGIFTAGI), 123 to 143 (MSYAKNFAIVGAMFSCTECLV), and 170 to 190 (AGVKAGAIGCGGFAAFSAAID).

The protein belongs to the Tim17/Tim22/Tim23 family. In terms of assembly, component of the TIM22 complex, whose core is composed of TIMM22, associated with peripheral protein FXC1/TIMM10B and the 70 kDa heterohexamer. In most cases, the 70 kDa complex is composed of TIMM9 and TIMM10 (TIMM10A or TIMM10B). A small fraction of the 70 kDa complex is composed of TIMM8 (TIMM8A/DDP1 or TIMM8B/DDP2) and TIMM13. The TIM22 complex also contains AGK and TIMM29. Interacts directly with TIMM9, TIMM10A and FXC1/TIMM10B. Interacts (when oxidized) with TIMM29; interaction is direct. Post-translationally, disulfide bonds promote efficient assembly of the TIM22 complex.

The protein localises to the mitochondrion inner membrane. Its function is as follows. Essential core component of the TIM22 complex, a complex that mediates the import and insertion of multi-pass transmembrane proteins into the mitochondrial inner membrane. In the TIM22 complex, it constitutes the voltage-activated and signal-gated channel. Forms a twin-pore translocase that uses the membrane potential as external driving force in 2 voltage-dependent steps. In Mus musculus (Mouse), this protein is Mitochondrial import inner membrane translocase subunit Tim22 (Timm22).